A 553-amino-acid chain; its full sequence is 2-succinyl-5-enolpyruvyl-6-hydroxy-3-cyclohexene-1-carboxylate synthase (553 aa).

This sequence belongs to the TPP enzyme family. MenD subfamily. Homodimer. Mg(2+) is required as a cofactor. Mn(2+) serves as cofactor. The cofactor is thiamine diphosphate.

The catalysed reaction is isochorismate + 2-oxoglutarate + H(+) = 5-enolpyruvoyl-6-hydroxy-2-succinyl-cyclohex-3-ene-1-carboxylate + CO2. It participates in quinol/quinone metabolism; 1,4-dihydroxy-2-naphthoate biosynthesis; 1,4-dihydroxy-2-naphthoate from chorismate: step 2/7. The protein operates within quinol/quinone metabolism; menaquinone biosynthesis. In terms of biological role, catalyzes the thiamine diphosphate-dependent decarboxylation of 2-oxoglutarate and the subsequent addition of the resulting succinic semialdehyde-thiamine pyrophosphate anion to isochorismate to yield 2-succinyl-5-enolpyruvyl-6-hydroxy-3-cyclohexene-1-carboxylate (SEPHCHC). The polypeptide is 2-succinyl-5-enolpyruvyl-6-hydroxy-3-cyclohexene-1-carboxylate synthase (Thermobifida fusca (strain YX)).